A 269-amino-acid chain; its full sequence is MVIFTDLDGTLLNHEDYSFKDAIPSLERIKKKGIPLVIVTSKTKKEVELIQKELGIEEPFIVENGAAVFFPKGYRGFNIRCDQENRYCIIKLGRDYREIRDFIEKIKDKFKIKGFGDMTVEEIVRLTDLPYDRAELAKERDFTEPFIIEDEKDIKDLEEIAEKEGFKITKGGRFYHLIGKGQDKGRAVQIVKKVFEENYGEVPLTVGLGDSRNDIPMLREVDIPILIPHINKKYESVNLPGIIKAEYPGSKGWNESIWRILNEIERGCC.

Asp-6 acts as the Nucleophile in catalysis. The Mg(2+) site is built by Asp-6, Asp-8, and Asp-210.

The protein belongs to the HAD-like hydrolase superfamily. MPGP family. As to quaternary structure, monomer. Co(2+) is required as a cofactor. Requires Mg(2+) as cofactor.

The enzyme catalyses (2R)-2-O-(alpha-D-glucopyranosyl)-3-phospho-glycerate + H2O = (2R)-2-O-(alpha-D-glucopyranosyl)-glycerate + phosphate. It catalyses the reaction 2-O-(alpha-D-mannosyl)-3-phosphoglycerate + H2O = (2R)-2-O-(alpha-D-mannosyl)-glycerate + phosphate. Its function is as follows. Involved in the biosynthesis of glucosylglycerate. Catalyzes the dephosphorylation of glucosyl-3-phosphoglycerate (GPG) and mannosyl-3-phosphoglycerate (MPG) to glucosylglycerate (GG) and mannosylglycerate (MG), respectively. This Persephonella marina (strain DSM 14350 / EX-H1) protein is Glucosyl-3-phosphoglycerate/mannosyl-3-phosphoglycerate phosphatase.